We begin with the raw amino-acid sequence, 727 residues long: NADH-ubiquinone oxidoreductase 75 kDa subunit, mitochondrial (727 aa).

Residues methionine 1 to serine 23 constitute a mitochondrion transit peptide. Residues asparagine 30–lysine 108 enclose the 2Fe-2S ferredoxin-type domain. Cysteine 64, cysteine 75, and cysteine 78 together coordinate [2Fe-2S] cluster. N6-acetyllysine is present on lysine 84. Cysteine 92 lines the [2Fe-2S] cluster pocket. In terms of domain architecture, 4Fe-4S His(Cys)3-ligated-type spans lysine 108–glycine 147. [4Fe-4S] cluster-binding residues include histidine 124, cysteine 128, cysteine 131, cysteine 137, cysteine 176, cysteine 179, cysteine 182, and cysteine 226. In terms of domain architecture, 4Fe-4S Mo/W bis-MGD-type spans threonine 245–arginine 301. N6-acetyllysine occurs at positions 499 and 709.

This sequence belongs to the complex I 75 kDa subunit family. As to quaternary structure, core subunit of respiratory chain NADH dehydrogenase (Complex I) which is composed of 45 different subunits. This is the largest subunit of complex I and it is a component of the iron-sulfur (IP) fragment of the enzyme. Complex I associates with ubiquinol-cytochrome reductase complex (Complex III) to form supercomplexes. Interacts with MDM2 and AKAP1. [2Fe-2S] cluster serves as cofactor. Requires [4Fe-4S] cluster as cofactor.

It is found in the mitochondrion inner membrane. The catalysed reaction is a ubiquinone + NADH + 5 H(+)(in) = a ubiquinol + NAD(+) + 4 H(+)(out). Functionally, core subunit of the mitochondrial membrane respiratory chain NADH dehydrogenase (Complex I) which catalyzes electron transfer from NADH through the respiratory chain, using ubiquinone as an electron acceptor. Essential for catalysing the entry and efficient transfer of electrons within complex I. Plays a key role in the assembly and stability of complex I and participates in the association of complex I with ubiquinol-cytochrome reductase complex (Complex III) to form supercomplexes. The chain is NADH-ubiquinone oxidoreductase 75 kDa subunit, mitochondrial (Ndufs1) from Rattus norvegicus (Rat).